We begin with the raw amino-acid sequence, 862 residues long: Switch 2 (862 aa).

Disordered regions lie at residues 13 to 43 (PCGSFPSSSSLRVSSTQELEPSRKPPKSSLS) and 58 to 95 (KHESKISKTQVEDFDHNEDDHKRNIKFDEEEVDEDDER). A compositionally biased stretch (low complexity) spans 16–27 (SFPSSSSLRVSS). The span at 58-84 (KHESKISKTQVEDFDHNEDDHKRNIKF) shows a compositional bias: basic and acidic residues. Positions 85–95 (DEEEVDEDDER) are enriched in acidic residues. In terms of domain architecture, Helicase ATP-binding spans 151-323 (YNLYKNNHGG…FNLFEWVAPG (173 aa)). ATP is bound at residue 164–171 (DDMGLGKT). Positions 274–277 (DEAH) match the DEAH box motif. A coiled-coil region spans residues 274–294 (DEAHRLKNEKSKLYEACLEIK). The region spanning 532–685 (ALEKLMASWI…VAGKMETRYF (154 aa)) is the Helicase C-terminal domain. The span at 782–793 (TTSTSQRLNGDG) shows a compositional bias: polar residues. A disordered region spans residues 782–821 (TTSTSQRLNGDGNSADRKKKKRKGCSEEEDMSSSNREQKR).

Belongs to the SNF2/RAD54 helicase family.

Its function is as follows. May be involved in early DNA damage response. Probable chromatin remodeling factor. This is Switch 2 from Arabidopsis thaliana (Mouse-ear cress).